The following is a 560-amino-acid chain: Probable sulfate transporter MT1781 (560 aa).

A run of 11 helical transmembrane segments spans residues 29 to 49 (VLAG…YATV), 51 to 71 (GLPP…YALL), 79 to 99 (IGPE…MAAG), 105 to 125 (AVLA…AGTA), 138 to 158 (VLVG…LGTI), 184 to 204 (WPTF…TRWA), 207 to 227 (APGP…MSLD), 256 to 276 (ALII…VLTA), 333 to 353 (LIAL…LAMF), 355 to 375 (IAAL…LSEF), and 394 to 414 (AAVL…LSIL). The region spanning 442–557 (DYPQAKRVPG…MTLPTAVQAF (116 aa)) is the STAS domain.

The protein belongs to the SLC26A/SulP transporter (TC 2.A.53) family.

It localises to the cell membrane. This is Probable sulfate transporter MT1781 from Mycobacterium tuberculosis (strain CDC 1551 / Oshkosh).